The following is a 458-amino-acid chain: ATP synthase subunit beta (458 aa).

An ATP-binding site is contributed by 148 to 155; sequence GGAGVGKT.

It belongs to the ATPase alpha/beta chains family. In terms of assembly, F-type ATPases have 2 components, CF(1) - the catalytic core - and CF(0) - the membrane proton channel. CF(1) has five subunits: alpha(3), beta(3), gamma(1), delta(1), epsilon(1). CF(0) has three main subunits: a(1), b(2) and c(9-12). The alpha and beta chains form an alternating ring which encloses part of the gamma chain. CF(1) is attached to CF(0) by a central stalk formed by the gamma and epsilon chains, while a peripheral stalk is formed by the delta and b chains.

It localises to the cell inner membrane. The enzyme catalyses ATP + H2O + 4 H(+)(in) = ADP + phosphate + 5 H(+)(out). Its function is as follows. Produces ATP from ADP in the presence of a proton gradient across the membrane. The catalytic sites are hosted primarily by the beta subunits. This Francisella tularensis subsp. mediasiatica (strain FSC147) protein is ATP synthase subunit beta.